Consider the following 445-residue polypeptide: MERAPPDGPLNASGALAGEAAAAGGARGFSAAWTAVLAALMALLIVATVLGNALVMLAFVADSSLRTQNNFFLLNLAISDFLVGAFCIPLYVPYVLTGRWTFGRGLCKLWLVVDYLLCTSSAFNIVLISYDRFLSVTRAVSYRAQQGDTRRAVRKMLLVWVLAFLLYGPAILSWEYLSGGSSIPEGHCYAEFFYNWYFLITASTLEFFTPFLSVTFFNLSIYLNIQRRTRLRLDGAREAAGPEPPPEAQPSPPPPPGCWGCWQKGHGEAMPLHRYGVGEAAVGAEAGEATLGGGGGGGSVASPTSSSGSSSRGTERPRSLKRGSKPSASSASLEKRMKMVSQSFTQRFRLSRDRKVAKSLAVIVSIFGLCWAPYTLLMIIRAACHGHCVPDYWYETSFWLLWANSAVNPVLYPLCHHSFRRAFTKLLCPQKLKIQPHSSLEHCWK.

The Extracellular portion of the chain corresponds to 1–39; that stretch reads MERAPPDGPLNASGALAGEAAAAGGARGFSAAWTAVLAA. Asparagine 11 carries an N-linked (GlcNAc...) asparagine glycan. The helical transmembrane segment at 40 to 60 threads the bilayer; the sequence is LMALLIVATVLGNALVMLAFV. Topologically, residues 61–70 are cytoplasmic; it reads ADSSLRTQNN. A helical transmembrane segment spans residues 71–91; it reads FFLLNLAISDFLVGAFCIPLY. The Extracellular portion of the chain corresponds to 92–108; the sequence is VPYVLTGRWTFGRGLCK. An intrachain disulfide couples cysteine 107 to cysteine 188. The helical transmembrane segment at 109-129 threads the bilayer; that stretch reads LWLVVDYLLCTSSAFNIVLIS. Over 130–156 the chain is Cytoplasmic; sequence YDRFLSVTRAVSYRAQQGDTRRAVRKM. A helical transmembrane segment spans residues 157–177; the sequence is LLVWVLAFLLYGPAILSWEYL. Residues 178 to 196 are Extracellular-facing; it reads SGGSSIPEGHCYAEFFYNW. Residues 197-217 form a helical membrane-spanning segment; the sequence is YFLITASTLEFFTPFLSVTFF. Over 218–359 the chain is Cytoplasmic; it reads NLSIYLNIQR…LSRDRKVAKS (142 aa). 2 disordered regions span residues 237-260 and 288-336; these read REAA…GCWG and EATL…LEKR. Over residues 242-257 the composition is skewed to pro residues; the sequence is PEPPPEAQPSPPPPPG. The span at 290 to 299 shows a compositional bias: gly residues; that stretch reads TLGGGGGGGS. Low complexity predominate over residues 300-312; the sequence is VASPTSSSGSSSR. Residues 360–380 form a helical membrane-spanning segment; it reads LAVIVSIFGLCWAPYTLLMII. Residues 381–395 are Extracellular-facing; the sequence is RAACHGHCVPDYWYE. A helical transmembrane segment spans residues 396 to 416; it reads TSFWLLWANSAVNPVLYPLCH. Over 417-445 the chain is Cytoplasmic; the sequence is HSFRRAFTKLLCPQKLKIQPHSSLEHCWK. Position 439 is a phosphoserine (serine 439).

It belongs to the G-protein coupled receptor 1 family. In terms of tissue distribution, expressed predominantly in the CNS, with the greatest expression in the thalamus and caudate nucleus. The various isoforms are mainly coexpressed in brain, but their relative expression level varies in a region-specific manner. Isoform 3 and isoform 7 are highly expressed in the thalamus, caudate nucleus and cerebellum while isoform 5 and isoform 6 show a poor expression. Isoform 5 and isoform 6 show a high expression in the amygdala, substantia nigra, cerebral cortex and hypothalamus. Isoform 7 is not found in hypothalamus or substantia nigra.

The protein resides in the cell membrane. Functionally, the H3 subclass of histamine receptors could mediate the histamine signals in CNS and peripheral nervous system. Signals through the inhibition of adenylate cyclase and displays high constitutive activity (spontaneous activity in the absence of agonist). Agonist stimulation of isoform 3 neither modified adenylate cyclase activity nor induced intracellular calcium mobilization. This is Histamine H3 receptor (HRH3) from Homo sapiens (Human).